We begin with the raw amino-acid sequence, 318 residues long: MAAGTAFAVDHAQIAQTGDTMFKGYLEPEQAKDYFAEAEKTSIVQQFAQKVPMGTTGQKIPHWVGDVSAQWIGEGDMKPITKGNMTSQTIAPHKIATIFVASAETVRANPANYLGTMRTKVATAFAMAFDGAAMHGTDSPFPTYIGQTTKAISIADTTGATTVYDQVAVNGLSLLVNDGKKWTHTLLDDITEPILNGAKDQNGRPLFIESTYGEAASPFRSGRIVARPTILSDHVVEGTTVGFMGDFSQLIWGQIGGLSFDVTDQATLNLGTVESPNFVSLWQHNLVAVRVEAEYAFHCNDAEAFVALTNVVSGGGEG.

The protein belongs to the L5likevirus major capsid protein gp17 family.

It is found in the virion. This Mycobacterium (Mycobacteriophage D29) protein is Probable major capsid protein gp17 (17).